We begin with the raw amino-acid sequence, 92 residues long: Small ribosomal subunit protein uS19 (92 aa).

It belongs to the universal ribosomal protein uS19 family.

Protein S19 forms a complex with S13 that binds strongly to the 16S ribosomal RNA. In Aeromonas hydrophila subsp. hydrophila (strain ATCC 7966 / DSM 30187 / BCRC 13018 / CCUG 14551 / JCM 1027 / KCTC 2358 / NCIMB 9240 / NCTC 8049), this protein is Small ribosomal subunit protein uS19.